Consider the following 378-residue polypeptide: Ribosomal RNA large subunit methyltransferase G (378 aa).

The protein belongs to the methyltransferase superfamily. RlmG family.

The protein localises to the cytoplasm. It catalyses the reaction guanosine(1835) in 23S rRNA + S-adenosyl-L-methionine = N(2)-methylguanosine(1835) in 23S rRNA + S-adenosyl-L-homocysteine + H(+). In terms of biological role, specifically methylates the guanine in position 1835 (m2G1835) of 23S rRNA. This Shewanella sp. (strain W3-18-1) protein is Ribosomal RNA large subunit methyltransferase G.